The primary structure comprises 37 residues: uncharacterized protein (37 aa).

A helical membrane pass occupies residues 13 to 33 (TFLTIIVLLMIVFGIAIVALL).

It is found in the host membrane. This is an uncharacterized protein from Acidianus convivator (ABV).